Here is a 326-residue protein sequence, read N- to C-terminus: Neuferricin homolog (326 aa).

Positions 1–34 (MEKNRRKKDDAGVMTKTLAGVAALTFLVSFICSS) are cleaved as a signal peptide. In terms of domain architecture, Cytochrome b5 heme-binding spans 98-197 (KHVFTPEQLH…KEYPLVGVVA (100 aa)).

Belongs to the cytochrome b5 family. MAPR subfamily.

The protein resides in the secreted. In terms of biological role, heme-binding protein. The chain is Neuferricin homolog from Caenorhabditis briggsae.